The primary structure comprises 113 residues: Ig kappa chain V-II region 7S34.1 (113 aa).

The framework-1 stretch occupies residues 1–23 (DIVMTQTAPSALVTPGESVSISC). Cys23 and Cys93 form a disulfide bridge. A complementarity-determining-1 region spans residues 24–39 (RSSKSLLHSNGNTYLY). A framework-2 region spans residues 40–54 (WFLQRPGQCPQLLIY). Residues 55 to 61 (RMSNLAS) form a complementarity-determining-2 region. A framework-3 region spans residues 62–93 (GVPDRFSGSGSGTAFTLRISRVEAEDVGVYYC). A complementarity-determining-3 region spans residues 94 to 102 (MQQREYPYT). The interval 103 to 112 (FGGGTKLEIK) is framework-4.

This Mus musculus (Mouse) protein is Ig kappa chain V-II region 7S34.1.